Reading from the N-terminus, the 134-residue chain is uncharacterized protein (134 aa).

The first 37 residues, 1–37, serve as a signal peptide directing secretion; that stretch reads MSYIKRDHTALRDIAMKTFLKVVGLAASLSAASVAFS.

This is an uncharacterized protein from Coxiella burnetii (strain RSA 493 / Nine Mile phase I).